A 64-amino-acid polypeptide reads, in one-letter code: MATVKFKYKGEEKQVDISKIKKVWRVGKMISFTYDEGGGKTGRGAVSEKDAPKELLQMLEKQKK.

K5 and K7 each carry N6-methyllysine; partial.

The protein belongs to the 7 kDa DNA-binding/endoribonuclease P2 family. In terms of assembly, homodimer. Lys-5 and Lys-7 were found to be 60% monomethylated. Post-translationally, ADP-ribosylated by endogenous proteins in vitro.

Its function is as follows. Can constrain negative DNA supercoils. May be involved in maintaining the integrity of the genome at high temperature. Has RNA endonuclease activity with a narrow substrate specificity; the cleavage products are 3'-phosphooligonucleotides. This chain is DNA-binding protein 7a (sso7a1), found in Saccharolobus solfataricus (strain ATCC 35092 / DSM 1617 / JCM 11322 / P2) (Sulfolobus solfataricus).